The following is a 122-amino-acid chain: UPF0102 protein BARBAKC583_1042 (122 aa).

Belongs to the UPF0102 family.

This chain is UPF0102 protein BARBAKC583_1042, found in Bartonella bacilliformis (strain ATCC 35685 / KC583 / Herrer 020/F12,63).